The chain runs to 119 residues: Large ribosomal subunit protein uL22 (119 aa).

Belongs to the universal ribosomal protein uL22 family. As to quaternary structure, part of the 50S ribosomal subunit.

This protein binds specifically to 23S rRNA; its binding is stimulated by other ribosomal proteins, e.g. L4, L17, and L20. It is important during the early stages of 50S assembly. It makes multiple contacts with different domains of the 23S rRNA in the assembled 50S subunit and ribosome. In terms of biological role, the globular domain of the protein is located near the polypeptide exit tunnel on the outside of the subunit, while an extended beta-hairpin is found that lines the wall of the exit tunnel in the center of the 70S ribosome. The polypeptide is Large ribosomal subunit protein uL22 (Chlorobium luteolum (strain DSM 273 / BCRC 81028 / 2530) (Pelodictyon luteolum)).